Reading from the N-terminus, the 707-residue chain is Polyribonucleotide nucleotidyltransferase (707 aa).

Residues aspartate 485 and aspartate 491 each contribute to the Mg(2+) site. In terms of domain architecture, KH spans 552-611 (PRIHTMKINSDKIKDVIGKGGAVIRALTEETGTTIEIEDDGTIKIAATEGAAAKEAIRRI). Residues 621–689 (GRIYTGKVMR…RQGRIRLSMK (69 aa)) form the S1 motif domain.

Belongs to the polyribonucleotide nucleotidyltransferase family. In terms of assembly, component of the RNA degradosome, which is a multiprotein complex involved in RNA processing and mRNA degradation. Mg(2+) is required as a cofactor.

Its subcellular location is the cytoplasm. The enzyme catalyses RNA(n+1) + phosphate = RNA(n) + a ribonucleoside 5'-diphosphate. Involved in mRNA degradation. Catalyzes the phosphorolysis of single-stranded polyribonucleotides processively in the 3'- to 5'-direction. In Photobacterium profundum (strain SS9), this protein is Polyribonucleotide nucleotidyltransferase.